The following is a 281-amino-acid chain: Rhomboid protease AarA (281 aa).

A run of 7 helical transmembrane segments spans residues 16–36 (FSLG…AVYF), 76–96 (MLHS…VIGI), 105–125 (FKLL…SAYW), 145–165 (IGVG…IYLI), 185–205 (QLYN…QSGV), 208–228 (AAHI…ILVP), and 233–253 (VANL…IYLY). Ser-150 acts as the Nucleophile in catalysis. The active-site Charge relay system is His-210.

Belongs to the peptidase S54 family.

The protein localises to the cell membrane. It catalyses the reaction Cleaves type-1 transmembrane domains using a catalytic dyad composed of serine and histidine that are contributed by different transmembrane domains.. Its function is as follows. Rhomboid serine protease that catalyzes intramembrane proteolysis. Mediates quorum-sensing and the subsequent regulation of target genes via activation of the Tat protein export system. Catalyzes the proteolytic activation of TatA by removal of its N-terminal extension. This is Rhomboid protease AarA (aarA) from Providencia stuartii.